The sequence spans 500 residues: L-arabinose isomerase (500 aa).

Positions 306, 333, 350, and 450 each coordinate Mn(2+).

The protein belongs to the arabinose isomerase family. Homohexamer. Mn(2+) serves as cofactor.

The enzyme catalyses beta-L-arabinopyranose = L-ribulose. It participates in carbohydrate degradation; L-arabinose degradation via L-ribulose; D-xylulose 5-phosphate from L-arabinose (bacterial route): step 1/3. Functionally, catalyzes the conversion of L-arabinose to L-ribulose. This Escherichia coli (strain 55989 / EAEC) protein is L-arabinose isomerase.